A 51-amino-acid polypeptide reads, in one-letter code: MRDKIRLVSSAGTGHFYTTDKNKKTMPEKMEIKKFDPTIRKHVIYKEAKIK.

This sequence belongs to the bacterial ribosomal protein bL33 family.

The sequence is that of Large ribosomal subunit protein bL33 from Colwellia psychrerythraea (strain 34H / ATCC BAA-681) (Vibrio psychroerythus).